We begin with the raw amino-acid sequence, 149 residues long: Large ribosomal subunit protein uL22 (149 aa).

This sequence belongs to the universal ribosomal protein uL22 family. In terms of assembly, part of the 50S ribosomal subunit.

This protein binds specifically to 23S rRNA. It makes multiple contacts with different domains of the 23S rRNA in the assembled 50S subunit and ribosome. Its function is as follows. The globular domain of the protein is located near the polypeptide exit tunnel on the outside of the subunit, while an extended beta-hairpin is found that lines the wall of the exit tunnel in the center of the 70S ribosome. This chain is Large ribosomal subunit protein uL22, found in Picrophilus torridus (strain ATCC 700027 / DSM 9790 / JCM 10055 / NBRC 100828 / KAW 2/3).